Here is a 171-residue protein sequence, read N- to C-terminus: Lipoprotein signal peptidase (171 aa).

4 helical membrane passes run 12–32, 42–62, 70–90, and 96–116; these read LAWL…KLYF, IVVI…AAFS, WQRW…VVWL, and NETW…GNLY. Active-site residues include Asp-126 and Asp-145. The helical transmembrane segment at 137–157 threads the bilayer; sequence YFPAFNVADSAITVGAVMLAL.

This sequence belongs to the peptidase A8 family.

The protein localises to the cell inner membrane. The catalysed reaction is Release of signal peptides from bacterial membrane prolipoproteins. Hydrolyzes -Xaa-Yaa-Zaa-|-(S,diacylglyceryl)Cys-, in which Xaa is hydrophobic (preferably Leu), and Yaa (Ala or Ser) and Zaa (Gly or Ala) have small, neutral side chains.. It functions in the pathway protein modification; lipoprotein biosynthesis (signal peptide cleavage). In terms of biological role, this protein specifically catalyzes the removal of signal peptides from prolipoproteins. This chain is Lipoprotein signal peptidase, found in Pseudomonas putida (strain ATCC 47054 / DSM 6125 / CFBP 8728 / NCIMB 11950 / KT2440).